The following is a 377-amino-acid chain: uncharacterized protein (377 aa).

Helical transmembrane passes span Leu23–Tyr43 and Gly251–Tyr271.

The protein resides in the cell membrane. This is an uncharacterized protein from Methanocaldococcus jannaschii (strain ATCC 43067 / DSM 2661 / JAL-1 / JCM 10045 / NBRC 100440) (Methanococcus jannaschii).